The chain runs to 131 residues: Thrombocorticin (131 aa).

A disulfide bond links Cys3 and Cys111. The tract at residues 28 to 60 is disordered; sequence RNESVEVKDSNGNTVSRGSGSSSSGGTFTVINM. The segment covering 37-54 has biased composition (low complexity); the sequence is SNGNTVSRGSGSSSSGGT. The Pseudodomain-swapping motif signature appears at 117 to 131; that stretch reads DFNDVFVLITGLVRG.

Functionally, binds to fucose and mannose in a calcium-dependent manner (in vitro). Acts as an agonist for human thrombopoietin receptor MPL (in vitro). Binding of sugar-moieties may promote the interaction with human MPL on the cell surface (in vitro). Catalyzes MPL dimerization and activation, and modulates internalization of the receptor (in vitro). Exhibits proliferation activity in murine recombinant Ba/F3 cells expressing human MPL (Ba/F3-huMPL) (in vitro). Induces phosphorylation of STAT5 in recombinant Ba/F3-huMPL cells, possibly by stimulating MPL on the cell surface to transduce signals via Jak/STAT signaling pathway (in vitro). Does not aggregate rabbit erythrocytes, indicating absent lectin-like agglutination activity (in vitro). The chain is Thrombocorticin from Corticium sp. (Marine sponge).